Here is a 394-residue protein sequence, read N- to C-terminus: Tryptophan synthase beta chain (394 aa).

N6-(pyridoxal phosphate)lysine is present on Lys-90.

Belongs to the TrpB family. As to quaternary structure, tetramer of two alpha and two beta chains. It depends on pyridoxal 5'-phosphate as a cofactor.

It carries out the reaction (1S,2R)-1-C-(indol-3-yl)glycerol 3-phosphate + L-serine = D-glyceraldehyde 3-phosphate + L-tryptophan + H2O. It functions in the pathway amino-acid biosynthesis; L-tryptophan biosynthesis; L-tryptophan from chorismate: step 5/5. Its function is as follows. The beta subunit is responsible for the synthesis of L-tryptophan from indole and L-serine. The sequence is that of Tryptophan synthase beta chain from Bacteroides thetaiotaomicron (strain ATCC 29148 / DSM 2079 / JCM 5827 / CCUG 10774 / NCTC 10582 / VPI-5482 / E50).